The sequence spans 130 residues: Small ribosomal subunit protein uS9 (130 aa).

Belongs to the universal ribosomal protein uS9 family.

In Alkalilimnicola ehrlichii (strain ATCC BAA-1101 / DSM 17681 / MLHE-1), this protein is Small ribosomal subunit protein uS9.